The sequence spans 549 residues: Tight junction-associated protein 1 (549 aa).

The segment at 1–34 (MSSAAPAKKPYRKAPPEHRELRLEIPVSRLEQEE) is disordered. The span at 14–23 (APPEHRELRL) shows a compositional bias: basic and acidic residues. A coiled-coil region spans residues 42 to 171 (MKLLQQENEE…EELNERYRLD (130 aa)). Disordered regions lie at residues 207 to 226 (RSGQ…LSPG) and 266 to 322 (VDMS…PLYP). Serine 295 is modified (phosphoserine). Pro residues predominate over residues 311–320 (YPTPSPPHPL). The residue at position 313 (threonine 313) is a Phosphothreonine. Phosphoserine occurs at positions 315 and 340. 3 disordered regions span residues 359–404 (EDGS…SEED), 410–429 (QRAF…RTAF), and 434–549 (LPEL…TVLS). The span at 369 to 383 (SVPSSPASAQGSPHH) shows a compositional bias: polar residues. Low complexity predominate over residues 389–400 (PSALSAPASSAS). A Phosphothreonine modification is found at threonine 417. Serine 483 bears the Phosphoserine mark. Residues 485–498 (EEERQSLLPDKEGT) show a composition bias toward basic and acidic residues. A compositionally biased stretch (basic residues) spans 522 to 534 (RSPKRMGVHHLHR). Serine 537 carries the phosphoserine modification. Polar residues predominate over residues 538-549 (LTQAQEQGTVLS).

Interacts with DLG1. Interacts with ARF6 (GTP-bound form). In terms of tissue distribution, widely expressed including in adult thymus, heart, lung, liver, small intestine, kidney, spleen, testis and skeletal muscle and in embryonic brain but not detected in adult brain (at protein level).

The protein resides in the golgi apparatus. It is found in the trans-Golgi network. Its subcellular location is the cell junction. The protein localises to the tight junction. It localises to the cell membrane. Plays a role in regulating the structure of the Golgi apparatus. The chain is Tight junction-associated protein 1 from Mus musculus (Mouse).